A 255-amino-acid polypeptide reads, in one-letter code: MDVEVKKNGKNAQLKDHEVKELIKQSQNGDQQARDLLIEKNMRLVWSVVQRFLNRGYEPDDLFQIGCIGLLKSVDKFDLTYDVRFSTYAVPMIIGEIQRFIRDDGTVKVSRSLKELGNKIRRAKDELSKTLGRVPTVQEIADHLEIEAEDVVLAQEAVRAPSSIHETVYENDGDPITLLDQIADNSEEKWFDKIALKEAISDLEEREKLIVYLRYYKDQTQSEVAERLGISQVQVSRLEKKILKQIKVQMDHTDG.

Positions 61 to 74 (DLFQIGCIGLLKSV) match the Polymerase core binding motif. The segment at residues 221–240 (QSEVAERLGISQVQVSRLEK) is a DNA-binding region (H-T-H motif).

This sequence belongs to the sigma-70 factor family. Interacts transiently with the RNAP core.

Interaction with SpoIIAB inhibits sigma-F activity throughout the cell before the formation of the asymmetric septum; after septation the interaction is confined to the mother cell, and sigma-F activity is released in the prespore. Fin, a second, forespore-specific anti-sigma factor is induced in 2 successive waves by sigma-F and sigma-G, by antagonizing sigma-F it allows the switch to sigma-G factor and progression to the late sporulation development stages. Functionally, sigma factors are initiation factors that promote the attachment of RNA polymerase to specific initiation sites and are then released. This sigma factor is responsible for the expression of sporulation specific genes. Interaction with SpoIIAB inhibits sigma-F activity throughout the cell before the formation of the asymmetric septum; after septation the interaction is confined to the mother cell, and sigma F activity is released in the prespore. Responsible for expression of csfB (the anti-sigma-G factor Gin). Associates with the RNAP core only in stationary phase cells. This is RNA polymerase sigma-F factor (sigF) from Bacillus subtilis (strain 168).